A 633-amino-acid polypeptide reads, in one-letter code: Glutamyl-tRNA(Gln) amidotransferase subunit E (633 aa).

The protein belongs to the GatB/GatE family. GatE subfamily. In terms of assembly, heterodimer of GatD and GatE.

The catalysed reaction is L-glutamyl-tRNA(Gln) + L-glutamine + ATP + H2O = L-glutaminyl-tRNA(Gln) + L-glutamate + ADP + phosphate + H(+). Functionally, allows the formation of correctly charged Gln-tRNA(Gln) through the transamidation of misacylated Glu-tRNA(Gln) in organisms which lack glutaminyl-tRNA synthetase. The reaction takes place in the presence of glutamine and ATP through an activated gamma-phospho-Glu-tRNA(Gln). The GatDE system is specific for glutamate and does not act on aspartate. This Methanosarcina acetivorans (strain ATCC 35395 / DSM 2834 / JCM 12185 / C2A) protein is Glutamyl-tRNA(Gln) amidotransferase subunit E.